A 603-amino-acid chain; its full sequence is Coiled-coil domain-containing protein 148 (603 aa).

Coiled-coil stretches lie at residues 365–429 (LAKD…KKKK) and 461–510 (EQSL…KQVA).

The protein is Coiled-coil domain-containing protein 148 (CCDC148) of Macaca fascicularis (Crab-eating macaque).